Here is a 355-residue protein sequence, read N- to C-terminus: uncharacterized protein (355 aa).

This is an uncharacterized protein from Aquifex aeolicus (strain VF5).